We begin with the raw amino-acid sequence, 395 residues long: S-adenosylmethionine synthase (395 aa).

Residue E10 participates in Mg(2+) binding. Position 16 (H16) interacts with ATP. E44 serves as a coordination point for K(+). Residues E57 and Q100 each coordinate L-methionine. ATP is bound by residues 168-170 (DGK), 236-239 (SGRF), 253-254 (RK), A270, K274, and K278. Position 278 (K278) interacts with L-methionine.

It belongs to the AdoMet synthase family. As to quaternary structure, homotetramer. Mn(2+) is required as a cofactor. It depends on Mg(2+) as a cofactor. The cofactor is Co(2+). Requires K(+) as cofactor.

It is found in the cytoplasm. It carries out the reaction L-methionine + ATP + H2O = S-adenosyl-L-methionine + phosphate + diphosphate. It participates in amino-acid biosynthesis; S-adenosyl-L-methionine biosynthesis; S-adenosyl-L-methionine from L-methionine: step 1/1. Catalyzes the formation of S-adenosylmethionine from methionine and ATP. The reaction comprises two steps that are both catalyzed by the same enzyme: formation of S-adenosylmethionine (AdoMet) and triphosphate, and subsequent hydrolysis of the triphosphate. The protein is S-adenosylmethionine synthase (METK) of Populus deltoides (Eastern poplar).